The primary structure comprises 356 residues: cGAMP-activated phospholipase (356 aa).

The 192-residue stretch at 15-206 folds into the PNPLA domain; that stretch reads LSLNGGGARG…VANNPSYIGL (192 aa). Residues 19 to 24 carry the GXGXXG motif; that stretch reads GGGARG. The GXSXG signature appears at 58–62; that stretch reads GTSIG. Ser-60 functions as the Nucleophile in the catalytic mechanism. Asp-193 serves as the catalytic Proton acceptor. The DGA/G motif lies at 193 to 195; sequence DGG.

Belongs to the patatin family.

It carries out the reaction a 1,2-diacyl-sn-glycero-3-phosphocholine + H2O = a 2-acyl-sn-glycero-3-phosphocholine + a fatty acid + H(+). It catalyses the reaction 1,2-di-(9Z-octadecenoyl)-sn-glycero-3-phosphoethanolamine + 2 H2O = sn-glycero-3-phosphoethanolamine + 2 (9Z)-octadecenoate + 2 H(+). Its activity is regulated as follows. Phospholipase activity is specifically activated upon 3',3'-cGAMP binding, which is produced by the cognate cyclic nucleotide synthase encoded in the same operon. Effector phospholipase of a CBASS antiviral system. CBASS (cyclic oligonucleotide-based antiphage signaling system) provides immunity against bacteriophages. The CD-NTase protein (DncV) synthesizes cyclic nucleotides in response to infection; these serve as specific second messenger signals. The signals activate a diverse range of effectors, leading to bacterial cell death and thus abortive phage infection. A type II-A(GA) CBASS system. In terms of biological role, phospholipase that is activated upon binding to the cyclic dinucleotide (CDN) second messenger 3',3'-cyclic GMP-AMP (cGAMP). Degrades phospholipids in the cell membrane. Functionally, protects E.coli against phage infection. When capV and dncV are introduced in E.coli MG1655 there is 1000-fold protection against phage P1; protection against other phage (T2, T4, T5, T6 and lambda-vir) requires the 2 subsequent genes (cap2 and cap3). Upon P1 phage infection the activating molecule is produced between 30 and 40 minutes. Activation leads to bacterial cell lysis and death, which occurs before the phage has finished its replication cycle, thus protecting non-infected bacteria by aborting the phage infection and preventing its propagation. In another paper the capV-dncV-cap2-cap3 operon gives 10(4)-10(5)-fold protection against phages lambda, T2, T4 and T6, about 1000-fold protection against P1 and 10-fold protection against T5. This Escherichia coli (strain TW11681) protein is cGAMP-activated phospholipase.